Consider the following 156-residue polypeptide: Small ribosomal subunit protein uS7 (156 aa).

Belongs to the universal ribosomal protein uS7 family. As to quaternary structure, part of the 30S ribosomal subunit. Contacts proteins S9 and S11.

In terms of biological role, one of the primary rRNA binding proteins, it binds directly to 16S rRNA where it nucleates assembly of the head domain of the 30S subunit. Is located at the subunit interface close to the decoding center, probably blocks exit of the E-site tRNA. This is Small ribosomal subunit protein uS7 from Thiobacillus denitrificans (strain ATCC 25259 / T1).